Reading from the N-terminus, the 533-residue chain is Putative amidase C550.07 (533 aa).

Residues K132 and S207 each act as charge relay system in the active site. Catalysis depends on S231, which acts as the Acyl-ester intermediate.

Belongs to the amidase family.

It localises to the cytoplasm. It is found in the nucleus. It catalyses the reaction a monocarboxylic acid amide + H2O = a monocarboxylate + NH4(+). The sequence is that of Putative amidase C550.07 from Schizosaccharomyces pombe (strain 972 / ATCC 24843) (Fission yeast).